Reading from the N-terminus, the 209-residue chain is Adenylate kinase (209 aa).

Residue 10–15 (GAGKGT) participates in ATP binding. Positions 30 to 59 (STGDLFRAAIKEQTDLGKKVKAVIDSGALV) are NMP. AMP is bound by residues Thr-31, Arg-36, 57-59 (ALV), 85-88 (GFPR), and Gln-92. An LID region spans residues 121–158 (GRRVCSSCGQSFHIEFVKPKKEGICDSCSGDLMIRPDD). Position 122 (Arg-122) interacts with ATP. Cys-125 and Cys-128 together coordinate Zn(2+). Position 131–132 (131–132 (SF)) interacts with ATP. Zn(2+) contacts are provided by Cys-145 and Cys-148. AMP is bound by residues Arg-155 and Arg-166. Position 194 (Pro-194) interacts with ATP.

Belongs to the adenylate kinase family. As to quaternary structure, monomer.

Its subcellular location is the cytoplasm. It catalyses the reaction AMP + ATP = 2 ADP. Its pathway is purine metabolism; AMP biosynthesis via salvage pathway; AMP from ADP: step 1/1. In terms of biological role, catalyzes the reversible transfer of the terminal phosphate group between ATP and AMP. Plays an important role in cellular energy homeostasis and in adenine nucleotide metabolism. The sequence is that of Adenylate kinase from Treponema denticola (strain ATCC 35405 / DSM 14222 / CIP 103919 / JCM 8153 / KCTC 15104).